A 458-amino-acid chain; its full sequence is Peptidyl-prolyl cis-trans isomerase FKBP4 (458 aa).

At methionine 1 the chain carries N-acetylmethionine; in peptidyl-prolyl cis-trans isomerase FKBP4; alternate. Residue threonine 2 is modified to N-acetylthreonine; in peptidyl-prolyl cis-trans isomerase FKBP4, N-terminally processed; partial. The region spanning glycine 50–lysine 138 is the PPIase FKBP-type 1 domain. Threonine 143 is subject to Phosphothreonine; by CK2. The PPIase FKBP-type 2 domain occupies glycine 167 to glutamate 253. Tyrosine 220 carries the phosphotyrosine modification. The interval leucine 267–threonine 400 is interaction with tubulin. TPR repeat units lie at residues serine 270–glutamate 303, leucine 319–asparagine 352, and glutamate 353–asparagine 386. Lysine 282 bears the N6-acetyllysine mark. Position 373 is an omega-N-methylarginine (arginine 373). A disordered region spans residues histidine 423–alanine 458. Phosphothreonine is present on threonine 436. Lysine 441 participates in a covalent cross-link: Glycyl lysine isopeptide (Lys-Gly) (interchain with G-Cter in SUMO1). The segment covering valine 447–alanine 458 has biased composition (polar residues).

Homodimer. Interacts with GLMN. Associates with HSP90AA1 and HSP70 in steroid hormone receptor complexes. Also interacts with peroxisomal phytanoyl-CoA alpha-hydroxylase (PHYH). Interacts with NR3C1 and dynein. Interacts with HSF1 in the HSP90 complex. Associates with tubulin. Interacts with MAPT/TAU. Interacts (via TPR domain) with S100A1, S100A2 and S100A6; the interaction is Ca(2+) dependent. Interaction with S100A1 and S100A2 (but not with S100A6) leads to inhibition of FKBP4-HSP90 interaction. Interacts with dynein; causes partially NR3C1 transport to the nucleus. In terms of processing, phosphorylation by CK2 results in loss of HSP90 binding activity. Widely detected in the brain (at protein level).

It is found in the cytoplasm. The protein localises to the cytosol. The protein resides in the mitochondrion. Its subcellular location is the nucleus. It localises to the cytoskeleton. It is found in the cell projection. The protein localises to the axon. It catalyses the reaction [protein]-peptidylproline (omega=180) = [protein]-peptidylproline (omega=0). With respect to regulation, inhibited by FK506. Immunophilin protein with PPIase and co-chaperone activities. Component of unligated steroid receptors heterocomplexes through interaction with heat-shock protein 90 (HSP90). Plays a role in the intracellular trafficking of heterooligomeric forms of steroid hormone receptors between cytoplasm and nuclear compartments. May have a protective role against oxidative stress in mitochondria. Also acts as a regulator of microtubule dynamics by inhibiting MAPT/TAU ability to promote microtubule assembly. The PPIase activity controls neuronal growth cones via regulation of TRPC1 channel opening. This chain is Peptidyl-prolyl cis-trans isomerase FKBP4 (Fkbp4), found in Rattus norvegicus (Rat).